A 253-amino-acid polypeptide reads, in one-letter code: Claudin domain-containing protein 1 (253 aa).

The helical transmembrane segment at 5 to 25 (FATAFVIACVLSLISTIYMAA) threads the bilayer. N-linked (GlcNAc...) asparagine glycosylation is found at asparagine 42 and asparagine 72. A run of 3 helical transmembrane segments spans residues 141-161 (FLLP…GLCA), 175-195 (ILHL…VAGI), and 216-236 (FCLA…FIWA).

It belongs to the PMP-22/EMP/MP20 family. As to expression, widely distributed in the adult CNS with highest expression in the corpus callosum, caudate nucleus, cerebral cortex, medulla, putamen, spinal cord, substantia nigra and subthalamic nucleus. Weak expression was detected in the adult heart.

It localises to the cell junction. Its subcellular location is the tight junction. It is found in the cell membrane. Its function is as follows. Plays a role in negatively regulating the permeability of cells to small molecules. This chain is Claudin domain-containing protein 1 (CLDND1), found in Homo sapiens (Human).